Consider the following 382-residue polypeptide: Farnesyl diphosphate synthase (382 aa).

Isopentenyl diphosphate-binding residues include lysine 81, arginine 84, and glutamine 120. Aspartate 127 and aspartate 131 together coordinate Mg(2+). Dimethylallyl diphosphate is bound at residue arginine 136. Isopentenyl diphosphate is bound at residue arginine 137. Dimethylallyl diphosphate-binding residues include lysine 230, threonine 231, glutamine 270, lysine 287, and lysine 296.

It belongs to the FPP/GGPP synthase family. The cofactor is Mg(2+).

It is found in the cytoplasm. It carries out the reaction isopentenyl diphosphate + dimethylallyl diphosphate = (2E)-geranyl diphosphate + diphosphate. It catalyses the reaction isopentenyl diphosphate + (2E)-geranyl diphosphate = (2E,6E)-farnesyl diphosphate + diphosphate. The protein operates within isoprenoid biosynthesis; farnesyl diphosphate biosynthesis; farnesyl diphosphate from geranyl diphosphate and isopentenyl diphosphate: step 1/1. It participates in isoprenoid biosynthesis; geranyl diphosphate biosynthesis; geranyl diphosphate from dimethylallyl diphosphate and isopentenyl diphosphate: step 1/1. Its activity is regulated as follows. Inhibited by aminobisphosphonate drugs (aBP), such as risedronate and alendronate. Key enzyme in isoprenoid biosynthesis which catalyzes the formation of farnesyl diphosphate (FPP), a sterol precursor. Involved in the inhibition of cell growth. This is Farnesyl diphosphate synthase (fps) from Dictyostelium discoideum (Social amoeba).